The following is a 349-amino-acid chain: Peptide chain release factor 1 (349 aa).

Residue Gln233 is modified to N5-methylglutamine.

This sequence belongs to the prokaryotic/mitochondrial release factor family. Methylated by PrmC. Methylation increases the termination efficiency of RF1.

Its subcellular location is the cytoplasm. Functionally, peptide chain release factor 1 directs the termination of translation in response to the peptide chain termination codons UAG and UAA. The chain is Peptide chain release factor 1 from Pelotomaculum thermopropionicum (strain DSM 13744 / JCM 10971 / SI).